A 228-amino-acid polypeptide reads, in one-letter code: 2-C-methyl-D-erythritol 4-phosphate cytidylyltransferase (228 aa).

It belongs to the IspD/TarI cytidylyltransferase family. IspD subfamily.

The catalysed reaction is 2-C-methyl-D-erythritol 4-phosphate + CTP + H(+) = 4-CDP-2-C-methyl-D-erythritol + diphosphate. It functions in the pathway isoprenoid biosynthesis; isopentenyl diphosphate biosynthesis via DXP pathway; isopentenyl diphosphate from 1-deoxy-D-xylulose 5-phosphate: step 2/6. Catalyzes the formation of 4-diphosphocytidyl-2-C-methyl-D-erythritol from CTP and 2-C-methyl-D-erythritol 4-phosphate (MEP). The polypeptide is 2-C-methyl-D-erythritol 4-phosphate cytidylyltransferase (Trichormus variabilis (strain ATCC 29413 / PCC 7937) (Anabaena variabilis)).